The following is a 70-amino-acid chain: MKKDIHPNYVEFNATCSCGNVVTTRSTIGKDIHLDVCSACHPFYTGKQKAAETGGRVDKFNKRFAAIGKK.

Zn(2+) is bound by residues C16, C18, C37, and C40.

It belongs to the bacterial ribosomal protein bL31 family. Type A subfamily. Part of the 50S ribosomal subunit. Requires Zn(2+) as cofactor.

Functionally, binds the 23S rRNA. The sequence is that of Large ribosomal subunit protein bL31 from Colwellia psychrerythraea (strain 34H / ATCC BAA-681) (Vibrio psychroerythus).